The chain runs to 155 residues: 6,7-dimethyl-8-ribityllumazine synthase (155 aa).

5-amino-6-(D-ribitylamino)uracil is bound by residues Phe23, 57-59 (AFE), and 81-83 (AVI). 86–87 (ST) contributes to the (2S)-2-hydroxy-3-oxobutyl phosphate binding site. The active-site Proton donor is the His89. Residue Phe114 coordinates 5-amino-6-(D-ribitylamino)uracil. Arg128 contributes to the (2S)-2-hydroxy-3-oxobutyl phosphate binding site.

The protein belongs to the DMRL synthase family.

The enzyme catalyses (2S)-2-hydroxy-3-oxobutyl phosphate + 5-amino-6-(D-ribitylamino)uracil = 6,7-dimethyl-8-(1-D-ribityl)lumazine + phosphate + 2 H2O + H(+). It participates in cofactor biosynthesis; riboflavin biosynthesis; riboflavin from 2-hydroxy-3-oxobutyl phosphate and 5-amino-6-(D-ribitylamino)uracil: step 1/2. Catalyzes the formation of 6,7-dimethyl-8-ribityllumazine by condensation of 5-amino-6-(D-ribitylamino)uracil with 3,4-dihydroxy-2-butanone 4-phosphate. This is the penultimate step in the biosynthesis of riboflavin. The protein is 6,7-dimethyl-8-ribityllumazine synthase of Trichlorobacter lovleyi (strain ATCC BAA-1151 / DSM 17278 / SZ) (Geobacter lovleyi).